A 441-amino-acid polypeptide reads, in one-letter code: MPRARKGNTPRKGGQRRGGGARSSAQADSGSSEDEAASEARSTTSECPSLLSTTAEDSLGGDTVDEQGPQEDLEEKLKEYVDGLTDKSAKTRQGALESLRLALASRLLPDFLLERRFTLADALEKCLKKGKGEEQALAAAVLGLLCVQLGPGPKGEELFHSLQPLLLSVLSDSTASPAARLHCASALGLGCYVAAADVQDLVSCLACLEGVFSRSCGTGSSTSHVAPASLHGVCCAALQAWALLLTICPSAHISHILDRQLPRLPQLLSSESVNLRIAAGETIALLFELARDLEEDFVYEDMEALCSTLRTLATDSNKYRAKADRRRQRSTFRAVLHYVEGGECEEETVRFGLEVLYVDSWARHRVYTSFKEALGSGLHHHLQNNELLRDIFGLGPVLVLDATALKACKISRFEKHLYNAAAFKARTKARSRVRDKRADIL.

A compositionally biased stretch (basic residues) spans 1–15 (MPRARKGNTPRKGGQ). Positions 1 to 72 (MPRARKGNTP…TVDEQGPQED (72 aa)) are disordered. Over residues 63 to 72 (TVDEQGPQED) the composition is skewed to acidic residues.

This sequence belongs to the IFRD family. As to quaternary structure, associates with ribosomes; promoting ribosome inactivation.

Functionally, ribosome-binding protein that acts as an inhibitor of mRNA translation by promoting ribosome inactivation. Associates with the P- and E-sites of the ribosome and inserts a C-terminal helix into the mRNA exit channel to preclude translation. In Oryctolagus cuniculus (Rabbit), this protein is Interferon-related developmental regulator 2.